A 221-amino-acid chain; its full sequence is MDTLDELLPREKMLRSGIASLSDVELLALFLRTGTPGKDVMTLAKEILQHFGSLYGLLSADFAQFRGVNGIGLAKFAQLKGIAELARRYYSVRMNEESALLSPEMTREFLQSQLTGEEREIFLVIFLDVQHRVLQHSRLFSGTLNHVEVHPREIVREAIKLNASAVILAHNHPSGCAEPSKADKLITERVIKCCQFMDIRVLDHLIIGRGEYVSFAERGWI.

Residues 99 to 221 (ALLSPEMTRE…YVSFAERGWI (123 aa)) enclose the MPN domain. His-170, His-172, and Asp-183 together coordinate Zn(2+). The JAMM motif signature appears at 170 to 183 (HNHPSGCAEPSKAD).

Belongs to the UPF0758 family. YicR subfamily.

This chain is UPF0758 protein YicR, found in Salmonella paratyphi A (strain ATCC 9150 / SARB42).